The following is a 754-amino-acid chain: Probable galactinol--sucrose galactosyltransferase 1 (754 aa).

The protein belongs to the glycosyl hydrolases 36 family.

It catalyses the reaction alpha-D-galactosyl-(1-&gt;3)-1D-myo-inositol + sucrose = raffinose + myo-inositol. Its function is as follows. Transglycosidase operating by a ping-pong reaction mechanism. Involved in the synthesis of raffinose, a major soluble carbohydrate in seeds, roots and tubers. The chain is Probable galactinol--sucrose galactosyltransferase 1 (RFS1) from Arabidopsis thaliana (Mouse-ear cress).